The primary structure comprises 310 residues: 4-hydroxyproline epimerase (310 aa).

The active-site Proton acceptor is the C88. Residues 89 to 90 (GH), H208, and D232 each bind substrate. The active-site Proton donor is C236. Residue 237–238 (GT) coordinates substrate.

It belongs to the proline racemase family. Homodimer.

The enzyme catalyses trans-4-hydroxy-L-proline = cis-4-hydroxy-D-proline. In terms of biological role, allows intracellular utilization of 4-hydroxyproline, one of the major constituents of host collagen, by converting 4-hydroxy-L-proline to 4-hydroxy-D-proline, which can be further metabolized by intracellular 4-hydroxy-D-proline oxidases. The chain is 4-hydroxyproline epimerase from Burkholderia cenocepacia (strain HI2424).